The chain runs to 284 residues: Nucleotide-binding protein Teth39_0666 (284 aa).

8 to 15 is a binding site for ATP; it reads GLSGAGKT. A GTP-binding site is contributed by 58–61; the sequence is DLRG.

Belongs to the RapZ-like family.

In terms of biological role, displays ATPase and GTPase activities. This Thermoanaerobacter pseudethanolicus (strain ATCC 33223 / 39E) (Clostridium thermohydrosulfuricum) protein is Nucleotide-binding protein Teth39_0666.